A 575-amino-acid polypeptide reads, in one-letter code: Putative export ATP-binding/permease protein RBE_0492 (575 aa).

The 284-residue stretch at 20–303 (LIIVIISLLS…IFELLSEMHL (284 aa)) folds into the ABC transmembrane type-1 domain. 6 helical membrane passes run 21 to 41 (IIVI…GNVF), 61 to 81 (ILYI…RSYF), 135 to 155 (FLSF…LMFF), 158 to 178 (FKLA…IIKF), 242 to 262 (ALFF…VIWI), and 277 to 297 (IISF…IFEL). An ABC transporter domain is found at 336–571 (LEFKNVNFSY…SDLYRTIYKE (236 aa)). 371–378 (GRSGSGKS) serves as a coordination point for ATP.

This sequence belongs to the ABC transporter superfamily. Homodimer.

Its subcellular location is the cell inner membrane. In terms of biological role, part of an ABC transporter complex. Transmembrane domains (TMD) form a pore in the inner membrane and the ATP-binding domain (NBD) is responsible for energy generation. The sequence is that of Putative export ATP-binding/permease protein RBE_0492 from Rickettsia bellii (strain RML369-C).